The primary structure comprises 403 residues: Poly(rC)-binding protein 4 (403 aa).

KH domains lie at 17 to 67 (TLTL…TITG), 101 to 154 (PVTL…TVSG), and 241 to 293 (TSSQ…TITG).

The protein resides in the cytoplasm. In terms of biological role, single-stranded nucleic acid binding protein that binds preferentially to oligo dC. This Bos taurus (Bovine) protein is Poly(rC)-binding protein 4 (PCBP4).